A 78-amino-acid chain; its full sequence is Acyl carrier protein (78 aa).

Residues 1 to 76 (MALFEDIQAV…DVVKYIEDNK (76 aa)) form the Carrier domain. Serine 36 is modified (O-(pantetheine 4'-phosphoryl)serine).

Belongs to the acyl carrier protein (ACP) family. Post-translationally, 4'-phosphopantetheine is transferred from CoA to a specific serine of apo-ACP by AcpS. This modification is essential for activity because fatty acids are bound in thioester linkage to the sulfhydryl of the prosthetic group.

The protein localises to the cytoplasm. Its pathway is lipid metabolism; fatty acid biosynthesis. Functionally, carrier of the growing fatty acid chain in fatty acid biosynthesis. This is Acyl carrier protein from Helicobacter pylori (strain J99 / ATCC 700824) (Campylobacter pylori J99).